The following is a 53-amino-acid chain: Conotoxin Cal6.27 (53 aa).

An N-terminal signal peptide occupies residues 1 to 24; that stretch reads MKLTCVLIAAMLLLAVCQLDSADA. 3 cysteine pairs are disulfide-bonded: Cys29–Cys43, Cys36–Cys47, and Cys42–Cys51.

It belongs to the conotoxin O1 superfamily. As to expression, expressed by the venom duct.

It localises to the secreted. Functionally, probable neurotoxin. The polypeptide is Conotoxin Cal6.27 (Californiconus californicus (California cone)).